We begin with the raw amino-acid sequence, 703 residues long: Probable ATP-dependent RNA helicase DHX35 (703 aa).

The region spanning 64–229 (LYLIENYQTV…FNQNETSDPA (166 aa)) is the Helicase ATP-binding domain. 77–84 (GETGCGKS) contributes to the ATP binding site. A DEAH box motif is present at residues 176–179 (DEAH). A Helicase C-terminal domain is found at 261–438 (TVETVVKIHQ…PVILQLKALG (178 aa)).

This sequence belongs to the DEAD box helicase family. DEAH subfamily. Identified in the spliceosome C complex.

The catalysed reaction is ATP + H2O = ADP + phosphate + H(+). Functionally, may be involved in pre-mRNA splicing. The sequence is that of Probable ATP-dependent RNA helicase DHX35 (DHX35) from Homo sapiens (Human).